Reading from the N-terminus, the 207-residue chain is Outer-membrane lipoprotein carrier protein (207 aa).

A signal peptide spans 1 to 21 (MRAIRMLLVSALALGTVTAYA).

It belongs to the LolA family. Monomer.

Its subcellular location is the periplasm. Participates in the translocation of lipoproteins from the inner membrane to the outer membrane. Only forms a complex with a lipoprotein if the residue after the N-terminal Cys is not an aspartate (The Asp acts as a targeting signal to indicate that the lipoprotein should stay in the inner membrane). The polypeptide is Outer-membrane lipoprotein carrier protein (Pseudomonas putida (strain GB-1)).